The chain runs to 151 residues: UPF0756 membrane protein Dred_1676 (151 aa).

4 consecutive transmembrane segments (helical) span residues 9 to 29, 47 to 67, 75 to 95, and 111 to 131; these read VILL…CASV, THGL…PIAT, LLYN…ILAT, and IIFG…GQPV.

Belongs to the UPF0756 family.

Its subcellular location is the cell membrane. The chain is UPF0756 membrane protein Dred_1676 from Desulforamulus reducens (strain ATCC BAA-1160 / DSM 100696 / MI-1) (Desulfotomaculum reducens).